Here is a 376-residue protein sequence, read N- to C-terminus: 28S rRNA (uridine-N(3))-methyltransferase (376 aa).

Disordered regions lie at residues 1-33 (MAERGRKRPCGPGEHGQRIEWRKWKQQKKEEKK) and 49-71 (AQEEQAKRLEEEEAAAEKEDRGR). Basic and acidic residues predominate over residues 15-33 (HGQRIEWRKWKQQKKEEKK). Positions 289, 292, 312, 341, and 342 each coordinate S-adenosyl-L-homocysteine. R292, G312, N341, and T342 together coordinate S-adenosyl-L-methionine.

The protein belongs to the class IV-like SAM-binding methyltransferase superfamily. As to quaternary structure, interacts with INCA1.

The protein localises to the cytoplasm. It is found in the cytoskeleton. It localises to the spindle. The protein resides in the chromosome. Its subcellular location is the centromere. The protein localises to the kinetochore. It is found in the microtubule organizing center. It localises to the centrosome. The enzyme catalyses uridine in 28S rRNA + S-adenosyl-L-methionine = N(3)-methyluridine in 28S rRNA + S-adenosyl-L-homocysteine + H(+). S-adenosyl-L-methionine-dependent methyltransferase that specifically methylates the N3 position of a uridine in 28S rRNA. Required for association of the centrosomes with the poles of the bipolar mitotic spindle during metaphase. Also involved in chromosome alignment. May promote centrosome maturation probably by recruiting A-kinase anchor protein AKAP9 to centrosomes in early mitosis. Binds specifically to miRNA MIR145 hairpin, regulates MIR145 expression at a postranscriptional level. In Homo sapiens (Human), this protein is 28S rRNA (uridine-N(3))-methyltransferase.